We begin with the raw amino-acid sequence, 378 residues long: Putative gustatory receptor 22f (378 aa).

At 1–13 (MKMFQPRRGFSCH) the chain is on the cytoplasmic side. A helical membrane pass occupies residues 14–34 (LAWFMLQTTLYASWLLGLFPF). Residues 35–48 (TFDSRRKQLKRSRW) lie on the Extracellular side of the membrane. Residues 49 to 69 (LLLYGFVLHSLAMCLAMSSHL) traverse the membrane as a helical segment. Over 70–88 (ASKQRRKYNAFERNPLLEK) the chain is Cytoplasmic. A helical transmembrane segment spans residues 89–109 (IYMQFQVTTFFTISVLLLMNV). The Extracellular segment spans residues 110-143 (WKSNTVRKIANELLTLEGQVKDLLTLKNCPNFNC). The chain crosses the membrane as a helical span at residues 144-164 (FVIKKHVAAIGQFVISIYFCL). Residues 165-178 (CQENSYPKILKILC) lie on the Cytoplasmic side of the membrane. Residues 179–199 (CLPSVGLQLIIMHFHTEIILV) form a helical membrane-spanning segment. The Extracellular portion of the chain corresponds to 200–245 (YRYVWLVNETLEDSHHLSSSRIHALASLYDRLLKLSELVVACNDLQ). A glycan (N-linked (GlcNAc...) asparagine) is linked at Asn207. A helical transmembrane segment spans residues 246–266 (LILMLIIYLIGNTVQIFFLIV). The Cytoplasmic segment spans residues 267–354 (LGVSMNKRYI…LCGLFSINHN (88 aa)). The helical transmembrane segment at 355–375 (MGFQMIITSFLYLVYLLQFDF) threads the bilayer. Over 376-378 (MNL) the chain is Extracellular.

Belongs to the insect chemoreceptor superfamily. Gustatory receptor (GR) family. Gr22e subfamily. As to expression, taste bristles in the foreleg and labial palps.

It localises to the cell membrane. In terms of biological role, probable gustatory receptor which mediates acceptance or avoidance behavior, depending on its substrates. This Drosophila melanogaster (Fruit fly) protein is Putative gustatory receptor 22f (Gr22f).